Reading from the N-terminus, the 121-residue chain is Small ribosomal subunit protein uS13 (121 aa).

A disordered region spans residues 97–121 (VRGQRTRTNARTRRGARKTVAGKKK). Over residues 100-121 (QRTRTNARTRRGARKTVAGKKK) the composition is skewed to basic residues.

This sequence belongs to the universal ribosomal protein uS13 family. As to quaternary structure, part of the 30S ribosomal subunit. Forms a loose heterodimer with protein S19. Forms two bridges to the 50S subunit in the 70S ribosome.

Its function is as follows. Located at the top of the head of the 30S subunit, it contacts several helices of the 16S rRNA. In the 70S ribosome it contacts the 23S rRNA (bridge B1a) and protein L5 of the 50S subunit (bridge B1b), connecting the 2 subunits; these bridges are implicated in subunit movement. Contacts the tRNAs in the A and P-sites. This Synechococcus sp. (strain WH7803) protein is Small ribosomal subunit protein uS13.